A 267-amino-acid chain; its full sequence is MSDHPTAYLVLASQRSGSTLLVESLRATGVAGEPQEFFQYLPNTSMSPQPREWFADVEDQSILRLLDPLIEGKPDLAPATIWRDYIQTVGRTPNGVWGGKLMWNQTPLLVQRAKDLPDRSGSGLLSAIRDVVGSDPVLIHIHRPDVVSQAVSFWRAVQTRVWRGRPDPVRDARAEYHAGAIAHVITMLRAQEEGWRAWFTEENVEPIDVDYPYLWRNLTEVVGTVLEALGQDPRLAPKPVLERQADQRSDEWVERYRRDAQRDGLPL.

Alpha,alpha-trehalose-binding positions include Gln14, 33-39, Pro48, and Trp53; that span reads EPQEFFQ. The active-site Proton acceptor is Glu36.

The protein belongs to the Stf0 sulfotransferase family. Homodimer.

The enzyme catalyses alpha,alpha-trehalose + 3'-phosphoadenylyl sulfate = 2-O-sulfo-alpha,alpha-trehalose + adenosine 3',5'-bisphosphate + H(+). Its pathway is glycolipid metabolism. Functionally, catalyzes the sulfuryl group transfer from 3'-phosphoadenosine-5'-phosphosulfate (PAPS) to trehalose, leading to trehalose-2-sulfate (T2S). The sulfation of trehalose is the first step in the biosynthesis of sulfolipid-1 (SL-1), a major cell wall glycolipid in pathogenic mycobacteria. Cannot use free glucose and unnatural stereoisomers of trehalose (alpha,beta (neo-trehalose) and beta,beta (iso-trehalose)) as substrates. The polypeptide is Trehalose 2-sulfotransferase (Mycolicibacterium smegmatis (strain ATCC 700084 / mc(2)155) (Mycobacterium smegmatis)).